We begin with the raw amino-acid sequence, 302 residues long: Probable alpha-L-glutamate ligase (302 aa).

In terms of domain architecture, ATP-grasp spans 104–287 (MQLLSREGVG…VAGMIIEFIE (184 aa)). Residues lysine 141, 178–179 (EF), aspartate 187, and 211–213 (RSN) contribute to the ATP site. Mg(2+) contacts are provided by aspartate 248, glutamate 260, and asparagine 262. 3 residues coordinate Mn(2+): aspartate 248, glutamate 260, and asparagine 262.

It belongs to the RimK family. The cofactor is Mg(2+). Mn(2+) serves as cofactor.

The sequence is that of Probable alpha-L-glutamate ligase from Halorhodospira halophila (strain DSM 244 / SL1) (Ectothiorhodospira halophila (strain DSM 244 / SL1)).